The chain runs to 208 residues: Phosphoribosyl-dephospho-CoA transferase (208 aa).

Residues D133 and D135 contribute to the active site.

The protein belongs to the MdcG family.

It catalyses the reaction apo-[malonate decarboxylase ACP] + 2'-(5''-triphospho-alpha-D-ribosyl)-3'-dephospho-CoA = holo-[malonate decarboxylase ACP] + diphosphate. Functionally, transfers 2'-(5-triphosphoribosyl)-3'-dephosphocoenzyme-A to the apo-[acyl-carrier-protein] of the malonate decarboxylase to yield holo-[acyl-carrier-protein]. This is Phosphoribosyl-dephospho-CoA transferase from Pseudomonas fluorescens (strain ATCC BAA-477 / NRRL B-23932 / Pf-5).